The primary structure comprises 111 residues: Disintegrin acostatin-alpha (111 aa).

The signal sequence occupies residues 1-20 (MIQVLLVTLCLAVFPYQGSS). The propeptide occupies 21-46 (IILESGNVNDYEVVYPRKVTALPKGA). One can recognise a Disintegrin domain in the interval 47–111 (IQPKNPCCDA…GDCPRKHFYA (65 aa)). At Gln48 the chain carries Pyrrolidone carboxylic acid; in Disintegrin acostatin-alpha, processed form. 4 disulfides stabilise this stretch: Cys53/Cys76, Cys67/Cys73, Cys72/Cys97, and Cys85/Cys104. Residues 89–91 (RGD) carry the Cell attachment site motif. A propeptide spanning residues 110 to 111 (YA) is cleaved from the precursor.

The protein belongs to the disintegrin family. Dimeric disintegrin subfamily. Heterodimer with subunit beta; disulfide-linked. As to expression, expressed by the venom gland.

The protein localises to the secreted. In terms of biological role, inhibits fibrinogen interaction with platelets. Acts by binding to alpha-IIb/beta-3 (ITGA2B/ITGB3) on the platelet surface and inhibits ADP-induced platelet aggregation in human platelet-rich plasma. The protein is Disintegrin acostatin-alpha of Agkistrodon contortrix contortrix (Southern copperhead).